Here is a 463-residue protein sequence, read N- to C-terminus: GTPase Der (463 aa).

2 EngA-type G domains span residues 3 to 166 (PVVA…PESG) and 177 to 350 (IRIA…QSAM). GTP-binding positions include 9–16 (GRTNVGKS), 56–60 (DTGGI), 118–121 (NKID), 183–190 (GRPNVGKS), 230–234 (DTAGI), and 295–298 (NKWD). One can recognise a KH-like domain in the interval 351–435 (LDLSASRLTQ…PLKLVFKSAE (85 aa)).

It belongs to the TRAFAC class TrmE-Era-EngA-EngB-Septin-like GTPase superfamily. EngA (Der) GTPase family. Associates with the 50S ribosomal subunit.

Its function is as follows. GTPase that plays an essential role in the late steps of ribosome biogenesis. The protein is GTPase Der of Methylococcus capsulatus (strain ATCC 33009 / NCIMB 11132 / Bath).